A 342-amino-acid polypeptide reads, in one-letter code: Isopentenyl-diphosphate delta-isomerase (342 aa).

Arginine 11–lysine 12 is a substrate binding site. Residues serine 68, serine 69 to threonine 71, serine 99, and asparagine 127 contribute to the FMN site. A substrate-binding site is contributed by serine 99 to arginine 101. A Mg(2+)-binding site is contributed by glutamate 163. FMN contacts are provided by residues lysine 194, threonine 224, and alanine 295 to glycine 296.

Belongs to the IPP isomerase type 2 family. In terms of assembly, homooctamer. Dimer of tetramers. FMN serves as cofactor. It depends on NADPH as a cofactor. Mg(2+) is required as a cofactor.

It localises to the cytoplasm. It carries out the reaction isopentenyl diphosphate = dimethylallyl diphosphate. Its function is as follows. Involved in the biosynthesis of isoprenoids. Catalyzes the 1,3-allylic rearrangement of the homoallylic substrate isopentenyl (IPP) to its allylic isomer, dimethylallyl diphosphate (DMAPP). The sequence is that of Isopentenyl-diphosphate delta-isomerase from Rickettsia typhi (strain ATCC VR-144 / Wilmington).